We begin with the raw amino-acid sequence, 497 residues long: Aldehyde dehydrogenase (497 aa).

241 to 246 (GSTLVG) lines the NAD(+) pocket. The Proton acceptor role is filled by Glu-264. Cys-298 serves as the catalytic Nucleophile.

It belongs to the aldehyde dehydrogenase family.

The enzyme catalyses an aldehyde + NAD(+) + H2O = a carboxylate + NADH + 2 H(+). It functions in the pathway alcohol metabolism; ethanol degradation; acetate from ethanol: step 2/2. The chain is Aldehyde dehydrogenase (aldA) from Emericella nidulans (strain FGSC A4 / ATCC 38163 / CBS 112.46 / NRRL 194 / M139) (Aspergillus nidulans).